A 1440-amino-acid chain; its full sequence is Bridge-like lipid transfer protein family member 3A (1440 aa).

Residues 3 to 95 (GIIKKQILKH…KVEVEMKTCE (93 aa)) enclose the Chorein N-terminal domain. 3 disordered regions span residues 267 to 307 (SAHQ…NSSS), 430 to 456 (ADSLSSPRKNPLERSPSQGRQPAFQPP), and 751 to 780 (KPSASFGSPVQSEALAPDSMSHPRSKTEHD). Positions 287–307 (SAQQSWAQAFGGSQGNSNSSS) are enriched in low complexity. 4 positions are modified to phosphoserine: Ser-444, Ser-446, Ser-755, and Ser-758. The stretch at 837–860 (ALLRLKEVLQRLQEQLTKDTESMT) forms a coiled coil. The segment at 891–1008 (VDADSAGSDS…ETAVNGQGEL (118 aa)) is disordered. The segment covering 911–920 (SEDRELKSDA) has biased composition (basic and acidic residues). Positions 985 to 995 (ASSSPAALKPP) are enriched in low complexity. Phosphoserine occurs at positions 988, 1103, and 1106. The tract at residues 1106-1180 (SFDGVSLDSS…SPAANSSVSP (75 aa)) is disordered. Residues 1134 to 1150 (LLESESGPESVPPGSLS) show a composition bias toward low complexity. The span at 1151–1180 (NVSDNAGVQGSPLVNNYGQGSPAANSSVSP) shows a compositional bias: polar residues. A coiled-coil region spans residues 1401-1435 (KELPILQKELIETKQALANANQDKEKLLQEIRKYN).

As to quaternary structure, homodimer (Potential). Interacts with UHRF1.

It localises to the late endosome. Its function is as follows. Tube-forming lipid transport protein which probably mediates the transfer of lipids between membranes at organelle contact sites. May be involved in the retrograde traffic of vesicle clusters in the endocytic pathway to the Golgi complex. In Homo sapiens (Human), this protein is Bridge-like lipid transfer protein family member 3A.